A 160-amino-acid chain; its full sequence is Putative 4-hydroxy-4-methyl-2-oxoglutarate aldolase (160 aa).

Substrate-binding positions include 76-79 (GGNL) and Arg98. Position 99 (Asp99) interacts with a divalent metal cation.

The protein belongs to the class II aldolase/RraA-like family. As to quaternary structure, homotrimer. A divalent metal cation serves as cofactor.

It carries out the reaction 4-hydroxy-4-methyl-2-oxoglutarate = 2 pyruvate. It catalyses the reaction oxaloacetate + H(+) = pyruvate + CO2. Functionally, catalyzes the aldol cleavage of 4-hydroxy-4-methyl-2-oxoglutarate (HMG) into 2 molecules of pyruvate. Also contains a secondary oxaloacetate (OAA) decarboxylase activity due to the common pyruvate enolate transition state formed following C-C bond cleavage in the retro-aldol and decarboxylation reactions. This chain is Putative 4-hydroxy-4-methyl-2-oxoglutarate aldolase, found in Deinococcus radiodurans (strain ATCC 13939 / DSM 20539 / JCM 16871 / CCUG 27074 / LMG 4051 / NBRC 15346 / NCIMB 9279 / VKM B-1422 / R1).